Here is a 404-residue protein sequence, read N- to C-terminus: RING-H2 finger protein ATL11 (404 aa).

The N-terminal stretch at 1–36 is a signal peptide; the sequence is MNPKGRTNLNRSIIGGHDHGSILQLLLFLLLLSSHG. A helical transmembrane segment spans residues 64–84; it reads AILMIVLVSVFFFLGFFSVYI. The RING-type; atypical zinc-finger motif lies at 144–186; the sequence is CSVCLNEFEDDETLRLIPKCCHVFHPGCIDAWLRSHTTCPLCR. Disordered regions lie at residues 339-361 and 385-404; these read PYRT…VRAS and VGEN…SNTV.

The protein belongs to the RING-type zinc finger family. ATL subfamily.

Its subcellular location is the membrane. It catalyses the reaction S-ubiquitinyl-[E2 ubiquitin-conjugating enzyme]-L-cysteine + [acceptor protein]-L-lysine = [E2 ubiquitin-conjugating enzyme]-L-cysteine + N(6)-ubiquitinyl-[acceptor protein]-L-lysine.. The protein operates within protein modification; protein ubiquitination. This chain is RING-H2 finger protein ATL11 (ATL11), found in Arabidopsis thaliana (Mouse-ear cress).